Here is a 189-residue protein sequence, read N- to C-terminus: Peptidyl-tRNA hydrolase (189 aa).

TRNA is bound at residue Y14. H19 acts as the Proton acceptor in catalysis. TRNA contacts are provided by Y64, N66, and N112.

It belongs to the PTH family. Monomer.

It is found in the cytoplasm. It catalyses the reaction an N-acyl-L-alpha-aminoacyl-tRNA + H2O = an N-acyl-L-amino acid + a tRNA + H(+). Its function is as follows. Hydrolyzes ribosome-free peptidyl-tRNAs (with 1 or more amino acids incorporated), which drop off the ribosome during protein synthesis, or as a result of ribosome stalling. Catalyzes the release of premature peptidyl moieties from peptidyl-tRNA molecules trapped in stalled 50S ribosomal subunits, and thus maintains levels of free tRNAs and 50S ribosomes. The polypeptide is Peptidyl-tRNA hydrolase (Clostridium botulinum (strain ATCC 19397 / Type A)).